Here is a 394-residue protein sequence, read N- to C-terminus: Phosphorylated adapter RNA export protein (394 aa).

Residues 1–18 (MALEVGDMEDGQLSDSDS) are compositionally biased toward acidic residues. Residues 1–33 (MALEVGDMEDGQLSDSDSDMTVAPSDRPLQLPK) form a disordered region. At Ala-2 the chain carries N-acetylalanine. The tract at residues 2 to 329 (ALEVGDMEDG…KAARKRRTQV (328 aa)) is necessary for interaction with CBP80. Phosphoserine is present on residues Ser-14, Ser-16, Ser-65, Ser-66, Ser-69, and Ser-73. Residues 81-84 (KRKR) carry the Nuclear localization signal motif. Residues 83–111 (KRQKCFNPPPKPEPFQFGQSSQKPPVAGG) form a disordered region. The Nuclear export signal motif lies at 130–139 (VATELGILGM). The span at 183 to 193 (KKMGSKEEENG) shows a compositional bias: basic and acidic residues. Residues 183–211 (KKMGSKEEENGQGHLKRKRPVKDRLGNRP) are disordered. The short motif at 198-201 (KRKR) is the Nuclear localization signal element. Ser-226 is modified (phosphoserine). The interval 228-328 (EKVADEISFR…KKAARKRRTQ (101 aa)) is sufficient for poly U RNA-binding. The segment at 279–287 (GSRRRTPGG) is necessary for poly U RNA-binding and snRNA export. Thr-296 carries the post-translational modification Phosphothreonine. Phosphoserine is present on residues Ser-356 and Ser-368.

The protein belongs to the PHAX family. Found in a U snRNA export complex with PHAX/RNUXA, NCBP1/CBP80, NCBP2/CBP20, RAN, XPO1 and m7G-capped RNA. Part of a precomplex with PHAX/RNUXA, NCBP1/CBP80, NCBP2/CBP20 and m7G-capped RNA. Interacts with NCBP1/CBP80. Found in a complex with snoRNA. Interacts with NCBP2/CBP20. Interacts with DDX39A; this interaction stimulates PHAX RNA binding activity. In terms of processing, phosphorylated in the nucleus. Dephosphorylated in the cytoplasm.

The protein localises to the nucleus. The protein resides in the nucleoplasm. It localises to the cajal body. It is found in the cytoplasm. Its function is as follows. A phosphoprotein adapter involved in the XPO1-mediated U snRNA export from the nucleus. Bridge components required for U snRNA export, the cap binding complex (CBC)-bound snRNA on the one hand and the GTPase Ran in its active GTP-bound form together with the export receptor XPO1 on the other. Its phosphorylation in the nucleus is required for U snRNA export complex assembly and export, while its dephosphorylation in the cytoplasm causes export complex disassembly. It is recycled back to the nucleus via the importin alpha/beta heterodimeric import receptor. The directionality of nuclear export is thought to be conferred by an asymmetric distribution of the GTP- and GDP-bound forms of Ran between the cytoplasm and nucleus. Its compartmentalized phosphorylation cycle may also contribute to the directionality of export. Binds strongly to m7G-capped U1 and U5 small nuclear RNAs (snRNAs) in a sequence-unspecific manner and phosphorylation-independent manner. Also plays a role in the biogenesis of U3 small nucleolar RNA (snoRNA). Involved in the U3 snoRNA transport from nucleoplasm to Cajal bodies. Binds strongly to m7G-capped U3, U8 and U13 precursor snoRNAs and weakly to trimethylated (TMG)-capped U3, U8 and U13 snoRNAs. Also binds to telomerase RNA. This is Phosphorylated adapter RNA export protein (PHAX) from Homo sapiens (Human).